Here is a 310-residue protein sequence, read N- to C-terminus: MSKPRKPKGRPISGWLILDKPVDFGSTEAVSKIKWLYKAEKAGHAGTLDPLASGMLPIALGDATKTVPYVMDGRKIYEFTVSWGEERATDDLEGDVTKSSDKRPSEQQIRDILPGYIGTISQVPPQFSAIKIAGERAYDLAREGETIEIPSREVDIFRLTLLACPDADSAHFEVECGKGTYVRALARDFGRELGCYGHVSGLRRTFVAPFAEGAMVPLADLVALEAIEDMDERLAALDALLIDTCEALSSLPHLVINDDQAHRLKMGNPILVRGRDAPVAESEAYATARGKLIAIGEIGQGEFRPKRVFA.

Asp49 serves as the catalytic Nucleophile.

Belongs to the pseudouridine synthase TruB family. Type 1 subfamily.

The catalysed reaction is uridine(55) in tRNA = pseudouridine(55) in tRNA. In terms of biological role, responsible for synthesis of pseudouridine from uracil-55 in the psi GC loop of transfer RNAs. This Rhizobium johnstonii (strain DSM 114642 / LMG 32736 / 3841) (Rhizobium leguminosarum bv. viciae) protein is tRNA pseudouridine synthase B.